The chain runs to 2936 residues: Neurobeachin (2936 aa).

Residues Glu961–Lys985 are disordered. Over residues Asn970 to Ala982 the composition is skewed to polar residues. Phosphoserine is present on residues Ser1001 and Ser1004. Composition is skewed to polar residues over residues Thr1203–Lys1220 and Thr1231–Ala1241. Disordered regions lie at residues Thr1203 to Leu1222, Thr1231 to Lys1265, and Ile1270 to Arg1289. Over residues Asp1253 to Lys1265 the composition is skewed to basic and acidic residues. The span at Ile1270–Gln1286 shows a compositional bias: polar residues. Residues Thr1316–Asp1358 form a WD 1 repeat. Disordered regions lie at residues Gln1480–Ile1521, Pro1639–Met1667, Val1701–Ser1721, and Thr1830–Ala1850. The residue at position 1519 (Ser1519) is a Phosphoserine. The span at Val1701 to Glu1714 shows a compositional bias: basic and acidic residues. A phosphoserine mark is found at Ser1704 and Ser1707. Residues Ser1835–Ser1845 are compositionally biased toward low complexity. Ser2128 is subject to Phosphoserine. Residues Asn2137–Pro2245 enclose the BEACH-type PH domain. Positions Ala2264–Arg2553 constitute a BEACH domain. Ser2565 carries the phosphoserine modification. WD repeat units lie at residues Gly2708–Gly2751, Gly2768–Glu2808, Glu2850–Ile2889, and Gly2892–Glu2931.

Belongs to the WD repeat neurobeachin family. Interacts with RII subunit of PKA. Forebrain, brainstem and cerebellum.

Its subcellular location is the membrane. The protein resides in the endomembrane system. The protein localises to the postsynaptic cell membrane. In terms of biological role, binds to type II regulatory subunits of protein kinase A and anchors/targets them to the membrane. May anchor the kinase to cytoskeletal and/or organelle-associated proteins. May have a role in membrane trafficking. This Mus musculus (Mouse) protein is Neurobeachin (Nbea).